Here is an 89-residue protein sequence, read N- to C-terminus: Large ribosomal subunit protein bL27 (89 aa).

Positions 1 to 20 (MAHKKAGGSSRNGRDSIGRR) are disordered.

This sequence belongs to the bacterial ribosomal protein bL27 family.

The sequence is that of Large ribosomal subunit protein bL27 from Ruegeria pomeroyi (strain ATCC 700808 / DSM 15171 / DSS-3) (Silicibacter pomeroyi).